A 318-amino-acid chain; its full sequence is Pyrimidine-specific ribonucleoside hydrolase RihA (318 aa).

The active site involves H240.

This sequence belongs to the IUNH family. RihA subfamily.

Functionally, hydrolyzes cytidine or uridine to ribose and cytosine or uracil, respectively. The protein is Pyrimidine-specific ribonucleoside hydrolase RihA of Shewanella oneidensis (strain ATCC 700550 / JCM 31522 / CIP 106686 / LMG 19005 / NCIMB 14063 / MR-1).